Reading from the N-terminus, the 331-residue chain is UPF0194 membrane protein YbhG (331 aa).

The N-terminal stretch at 1–19 (MKKPVVIGLAIAAIVAVIA) is a signal peptide. Positions 107–208 (EEIAQAAAAV…LDLQDTTLIA (102 aa)) form a coiled coil.

It belongs to the UPF0194 family.

Its subcellular location is the periplasm. This is UPF0194 membrane protein YbhG from Salmonella agona (strain SL483).